A 110-amino-acid polypeptide reads, in one-letter code: Large ribosomal subunit protein uL22 (110 aa).

This sequence belongs to the universal ribosomal protein uL22 family. As to quaternary structure, part of the 50S ribosomal subunit.

In terms of biological role, this protein binds specifically to 23S rRNA; its binding is stimulated by other ribosomal proteins, e.g. L4, L17, and L20. It is important during the early stages of 50S assembly. It makes multiple contacts with different domains of the 23S rRNA in the assembled 50S subunit and ribosome. The globular domain of the protein is located near the polypeptide exit tunnel on the outside of the subunit, while an extended beta-hairpin is found that lines the wall of the exit tunnel in the center of the 70S ribosome. The protein is Large ribosomal subunit protein uL22 of Janthinobacterium sp. (strain Marseille) (Minibacterium massiliensis).